We begin with the raw amino-acid sequence, 865 residues long: FO synthase (865 aa).

Positions 1–21 are disordered; sequence MIEGVTELATPNVPPAPPSPS. Radical SAM core domains lie at 76 to 320 and 544 to 785; these read ITYS…LGPD and VTYV…DNIQ. The interval 77–409 is cofG-like; sequence TYSRNVFIPL…PRIGAHVAAL (333 aa). 6 residues coordinate [4Fe-4S] cluster: Cys90, Cys94, Cys97, Cys558, Cys562, and Cys565. A cofH-like region spans residues 521-854; it reads DGAELDAVAA…RERTTVYGRV (334 aa).

The protein in the N-terminal section; belongs to the radical SAM superfamily. CofG family. In the C-terminal section; belongs to the radical SAM superfamily. CofH family. Requires [4Fe-4S] cluster as cofactor.

It catalyses the reaction 5-amino-6-(D-ribitylamino)uracil + L-tyrosine + S-adenosyl-L-methionine = 5-amino-5-(4-hydroxybenzyl)-6-(D-ribitylimino)-5,6-dihydrouracil + 2-iminoacetate + 5'-deoxyadenosine + L-methionine + H(+). It carries out the reaction 5-amino-5-(4-hydroxybenzyl)-6-(D-ribitylimino)-5,6-dihydrouracil + S-adenosyl-L-methionine = 7,8-didemethyl-8-hydroxy-5-deazariboflavin + 5'-deoxyadenosine + L-methionine + NH4(+) + H(+). It participates in cofactor biosynthesis; coenzyme F0 biosynthesis. Its function is as follows. Catalyzes the radical-mediated synthesis of 7,8-didemethyl-8-hydroxy-5-deazariboflavin (FO) from 5-amino-6-(D-ribitylamino)uracil and L-tyrosine. This is FO synthase (fbiC) from Nocardia farcinica (strain IFM 10152).